The primary structure comprises 149 residues: Transcription factor MafF (149 aa).

Residues 51–76 (RLKQRRRTLKNRGYAASCRVKRVCQK) are basic motif. Residues 51-114 (RLKQRRRTLK…DTLRGKYEAL (64 aa)) form the bZIP domain. The interval 79–93 (LQKQKMELEWEVDKL) is leucine-zipper.

Belongs to the bZIP family. Maf subfamily. In terms of assembly, monomer and homo- or heterodimer. As to expression, highly expressed in the ovary, lower expression in the brain, heart and mesenterium.

Its subcellular location is the nucleus. Since it lacks a putative transactivation domain, it may behave as a transcriptional repressor when it dimerizes among itself. May also serve as a transcriptional activator by dimerizing with other (usually larger) basic-zipper proteins and recruiting them to specific DNA-binding sites. May be involved in the cellular stress response. The chain is Transcription factor MafF (MAFF) from Gallus gallus (Chicken).